Consider the following 58-residue polypeptide: Large ribosomal subunit protein uL30 (58 aa).

Belongs to the universal ribosomal protein uL30 family. As to quaternary structure, part of the 50S ribosomal subunit.

In Pseudomonas putida (strain W619), this protein is Large ribosomal subunit protein uL30.